The primary structure comprises 65 residues: Large ribosomal subunit protein bL31 (65 aa).

Zn(2+)-binding residues include Cys-16, Cys-18, Cys-36, and Cys-39.

Belongs to the bacterial ribosomal protein bL31 family. Type A subfamily. In terms of assembly, part of the 50S ribosomal subunit. Zn(2+) serves as cofactor.

Its function is as follows. Binds the 23S rRNA. The polypeptide is Large ribosomal subunit protein bL31 (Geobacter sulfurreducens (strain ATCC 51573 / DSM 12127 / PCA)).